The chain runs to 351 residues: Ion-translocating oxidoreductase complex subunit D (351 aa).

4 helical membrane-spanning segments follow: residues 18 to 38 (IMLL…YFFG), 42 to 62 (LIQV…VLHL), 87 to 107 (LPPL…IIIA), and 121 to 141 (PAMV…TSWL). Threonine 185 bears the FMN phosphoryl threonine mark. The next 5 helical transmembrane spans lie at 212-232 (LAGI…LLLL), 241-261 (IPVS…MIAP), 264-284 (FAPP…FFIA), 298-318 (LIFG…GGYP), and 320-340 (GVAF…HYTQ).

This sequence belongs to the NqrB/RnfD family. The complex is composed of six subunits: RnfA, RnfB, RnfC, RnfD, RnfE and RnfG. The cofactor is FMN.

The protein resides in the cell inner membrane. Functionally, part of a membrane-bound complex that couples electron transfer with translocation of ions across the membrane. In Yersinia enterocolitica serotype O:8 / biotype 1B (strain NCTC 13174 / 8081), this protein is Ion-translocating oxidoreductase complex subunit D.